Consider the following 376-residue polypeptide: Succinyl-diaminopimelate desuccinylase (376 aa).

Residue His-66 coordinates Zn(2+). Residue Asp-68 is part of the active site. Asp-99 serves as a coordination point for Zn(2+). The Proton acceptor role is filled by Glu-133. 3 residues coordinate Zn(2+): Glu-134, Glu-162, and His-348.

This sequence belongs to the peptidase M20A family. DapE subfamily. In terms of assembly, homodimer. Zn(2+) serves as cofactor. Co(2+) is required as a cofactor.

It carries out the reaction N-succinyl-(2S,6S)-2,6-diaminopimelate + H2O = (2S,6S)-2,6-diaminopimelate + succinate. It participates in amino-acid biosynthesis; L-lysine biosynthesis via DAP pathway; LL-2,6-diaminopimelate from (S)-tetrahydrodipicolinate (succinylase route): step 3/3. Catalyzes the hydrolysis of N-succinyl-L,L-diaminopimelic acid (SDAP), forming succinate and LL-2,6-diaminopimelate (DAP), an intermediate involved in the bacterial biosynthesis of lysine and meso-diaminopimelic acid, an essential component of bacterial cell walls. In Xanthomonas euvesicatoria pv. vesicatoria (strain 85-10) (Xanthomonas campestris pv. vesicatoria), this protein is Succinyl-diaminopimelate desuccinylase.